The sequence spans 161 residues: Cell division control protein 31 (161 aa).

EF-hand domains lie at 20 to 55, 56 to 91, 93 to 128, and 129 to 161; these read EQKQ…LGFE, LPKR…KILK, DPLD…LGET, and LTDE…CTDS. 4 residues coordinate Ca(2+): Asp33, Asn35, Asp37, and Glu44. Thr130 carries the post-translational modification Phosphothreonine. Ca(2+) contacts are provided by Asp142, Asp144, Asp146, Glu148, and Glu153.

This sequence belongs to the centrin family. As to quaternary structure, component of the spindle pole body (SPB), acting as the connector of microtubule arrays in the cytoplasm and the nucleoplasm, is involved in nuclear positioning before chromosome segregation, SPB separation, spindle formation, chromosome segregation, nuclear migration into the bud, nuclear reorientation after cytokinesis and nuclear fusion during conjugation. The SPB half-bridge, which is tightly associated with the cytoplasmic side of the nuclear envelope and the SPB, is playing a key role as the starting structure for and in the initiation of SPB duplication in G1. At the SPB half-bridge CDC31 interacts with KAR1, MPS3 and SFI1. Interacts with KIC1. Interacts with VPS13. Associates with nuclear pore complexes (NPCs).

The protein resides in the nucleus envelope. It localises to the cytoplasm. The protein localises to the cytoskeleton. Its subcellular location is the microtubule organizing center. It is found in the spindle pole body. Functions as a component of the spindle pole body (SPB) half-bridge. At the SPB, it is recruited by KAR1 and MPS3 to the SPB half-bridge and involved in the initial steps of SPB duplication. Also involved in connection with the protein kinase KIC1 in the maintenance of cell morphology and integrity. May play a role in vesicle-mediated transport, in a VPS13-dependent manner. This Saccharomyces cerevisiae (strain ATCC 204508 / S288c) (Baker's yeast) protein is Cell division control protein 31 (CDC31).